The chain runs to 489 residues: Coiled-coil domain-containing protein 77 (489 aa).

Phosphoserine is present on S38. 2 coiled-coil regions span residues S57–L120 and E212–R487.

This Mus musculus (Mouse) protein is Coiled-coil domain-containing protein 77 (Ccdc77).